We begin with the raw amino-acid sequence, 615 residues long: Hypermethylated in cancer 2 protein (615 aa).

A BTB domain is found at 46-109; it reads CDVIIMVENS…IYTGKLLPSD (64 aa). The disordered stretch occupies residues 144–167; it reads KPFGSGRAGSTGMGRPPRSQRLST. 3 positions are modified to phosphoserine: serine 166, serine 169, and serine 197. 2 disordered regions span residues 182–208 and 229–421; these read RKGAHAPQELPQAKGSDDELFLGGSNQ and GCSS…SGHA. The segment at 246-250 is binding to CtBP; it reads GLDLS. Over residues 280 to 296 the composition is skewed to low complexity; it reads SPPAASAPPVANSASYS. The span at 336-356 shows a compositional bias: basic and acidic residues; the sequence is KKEWGKKEPVAGSPFERREAG. At serine 348 the chain carries Phosphoserine. Low complexity predominate over residues 379-388; that stretch reads ASGAGPSGPY. The residue at position 412 (serine 412) is a Phosphoserine. 5 C2H2-type zinc fingers span residues 442 to 469, 505 to 532, 533 to 560, 561 to 588, and 589 to 615; these read YVCIPCAKGFPSSEQLNAHVETHTEEEL, FKCSVCEKTYKDPATLRQHEKTHWLTRP, FPCNICGKMFTQRGTMTRHMRSHLGLKP, FACDECGMRFTRQYRLTEHMRVHSGEKP, and YECQLCGGKFTQQRNLISHLRMHTSPS.

It belongs to the krueppel C2H2-type zinc-finger protein family. Hic subfamily. As to quaternary structure, self-associates. Interacts with HIC1. In terms of tissue distribution, highest levels in cerebellum.

Its subcellular location is the nucleus. Functionally, transcriptional repressor. This Homo sapiens (Human) protein is Hypermethylated in cancer 2 protein (HIC2).